The chain runs to 620 residues: Dihydroxy-acid dehydratase (620 aa).

D81 provides a ligand contact to Mg(2+). C122 provides a ligand contact to [2Fe-2S] cluster. Residues D123 and K124 each coordinate Mg(2+). K124 carries the post-translational modification N6-carboxylysine. C195 is a binding site for [2Fe-2S] cluster. E491 serves as a coordination point for Mg(2+). S517 (proton acceptor) is an active-site residue.

Belongs to the IlvD/Edd family. In terms of assembly, homodimer. Requires [2Fe-2S] cluster as cofactor. Mg(2+) is required as a cofactor.

It carries out the reaction (2R)-2,3-dihydroxy-3-methylbutanoate = 3-methyl-2-oxobutanoate + H2O. The enzyme catalyses (2R,3R)-2,3-dihydroxy-3-methylpentanoate = (S)-3-methyl-2-oxopentanoate + H2O. It participates in amino-acid biosynthesis; L-isoleucine biosynthesis; L-isoleucine from 2-oxobutanoate: step 3/4. The protein operates within amino-acid biosynthesis; L-valine biosynthesis; L-valine from pyruvate: step 3/4. Functions in the biosynthesis of branched-chain amino acids. Catalyzes the dehydration of (2R,3R)-2,3-dihydroxy-3-methylpentanoate (2,3-dihydroxy-3-methylvalerate) into 2-oxo-3-methylpentanoate (2-oxo-3-methylvalerate) and of (2R)-2,3-dihydroxy-3-methylbutanoate (2,3-dihydroxyisovalerate) into 2-oxo-3-methylbutanoate (2-oxoisovalerate), the penultimate precursor to L-isoleucine and L-valine, respectively. This Colwellia psychrerythraea (strain 34H / ATCC BAA-681) (Vibrio psychroerythus) protein is Dihydroxy-acid dehydratase.